The following is a 396-amino-acid chain: Tryptophan synthase beta chain (396 aa).

Lys-86 is subject to N6-(pyridoxal phosphate)lysine.

This sequence belongs to the TrpB family. In terms of assembly, tetramer of two alpha and two beta chains. Requires pyridoxal 5'-phosphate as cofactor.

The enzyme catalyses (1S,2R)-1-C-(indol-3-yl)glycerol 3-phosphate + L-serine = D-glyceraldehyde 3-phosphate + L-tryptophan + H2O. The protein operates within amino-acid biosynthesis; L-tryptophan biosynthesis; L-tryptophan from chorismate: step 5/5. The beta subunit is responsible for the synthesis of L-tryptophan from indole and L-serine. The chain is Tryptophan synthase beta chain from Serratia proteamaculans (strain 568).